The primary structure comprises 158 residues: Endoribonuclease YbeY (158 aa).

Residues His119, His123, and Asp129 each coordinate Zn(2+).

The protein belongs to the endoribonuclease YbeY family. It depends on Zn(2+) as a cofactor.

It localises to the cytoplasm. In terms of biological role, single strand-specific metallo-endoribonuclease involved in late-stage 70S ribosome quality control and in maturation of the 3' terminus of the 16S rRNA. This chain is Endoribonuclease YbeY, found in Chlamydia caviae (strain ATCC VR-813 / DSM 19441 / 03DC25 / GPIC) (Chlamydophila caviae).